The chain runs to 354 residues: Ferrochelatase (354 aa).

Fe cation contacts are provided by His214 and Glu295.

The protein belongs to the ferrochelatase family.

Its subcellular location is the cytoplasm. The enzyme catalyses heme b + 2 H(+) = protoporphyrin IX + Fe(2+). It functions in the pathway porphyrin-containing compound metabolism; protoheme biosynthesis; protoheme from protoporphyrin-IX: step 1/1. Catalyzes the ferrous insertion into protoporphyrin IX. This chain is Ferrochelatase, found in Burkholderia orbicola (strain AU 1054).